Consider the following 814-residue polypeptide: Spore development regulator umv1 (814 aa).

Disordered regions lie at residues 1-36, 96-134, 267-333, 407-441, 457-501, and 539-814; these read MSRP…GSTE, HDRP…VRRG, QGLK…MPRS, PPRD…RAGP, PVRS…ASLT, and QSSG…NQPY. A compositionally biased stretch (polar residues) spans 7–18; sequence RSGNASTPQGTS. Positions 53 to 274 constitute a Velvet domain; sequence RDHIEYQLTV…AEQGLKVRVR (222 aa). The span at 271–285 shows a compositional bias: basic residues; sequence VRVRKHPRSRRRGSK. Residues 407-423 are compositionally biased toward basic and acidic residues; sequence PPRDFADGRYMDGDYPP. Residues 438–445 carry the Nuclear localization signal motif; that stretch reads RAGPSEYS. Low complexity predominate over residues 620 to 631; it reads AAARRSPIPSAR. Basic and acidic residues-rich tracts occupy residues 723-741 and 760-796; these read TRDR…DRDQ and GELD…RRDF. A compositionally biased stretch (polar residues) spans 800–814; it reads TMPSKPSSRGHNQPY.

Belongs to the velvet family. VosA subfamily. Forms a heterodimeric complex with velB; the formation of the VEL2-VOS1 complex is light-dependent.

The protein resides in the nucleus. Its function is as follows. Component of the velB-VosA heterodimeric complex that plays a dual role in activating genes associated with spore maturation and repressing certain development-associated genes. The complex binds DNA through the DNA-binding domain of vosA that recognizes an 11-nucleotide consensus sequence 5'-CTGGCCGCGGC-3' consisting of two motifs in the promoters of key developmental regulatory genes. Required for gall induction and teliospore formation on seedlings. This is Spore development regulator umv1 from Mycosarcoma maydis (Corn smut fungus).